The sequence spans 359 residues: tRNA-specific 2-thiouridylase MnmA (359 aa).

ATP is bound by residues 9–16 and Met35; that span reads GMSGGVDS. Cys104 acts as the Nucleophile in catalysis. Cys104 and Cys200 are disulfide-bonded. Residue Gly128 coordinates ATP. The segment at 150–152 is interaction with tRNA; sequence KDQ. The active-site Cysteine persulfide intermediate is Cys200. Residues 306–307 are interaction with tRNA; it reads RY.

The protein belongs to the MnmA/TRMU family.

Its subcellular location is the cytoplasm. It catalyses the reaction S-sulfanyl-L-cysteinyl-[protein] + uridine(34) in tRNA + AH2 + ATP = 2-thiouridine(34) in tRNA + L-cysteinyl-[protein] + A + AMP + diphosphate + H(+). Its function is as follows. Catalyzes the 2-thiolation of uridine at the wobble position (U34) of tRNA, leading to the formation of s(2)U34. The sequence is that of tRNA-specific 2-thiouridylase MnmA from Clostridium perfringens (strain ATCC 13124 / DSM 756 / JCM 1290 / NCIMB 6125 / NCTC 8237 / Type A).